The chain runs to 321 residues: CPX chromosomal region candidate gene 1 protein homolog (321 aa).

The interval Met-1 to Glu-83 is disordered. 2 stretches are compositionally biased toward polar residues: residues Asn-21 to Glu-32 and Val-44 to Glu-60.

This Macaca fascicularis (Crab-eating macaque) protein is CPX chromosomal region candidate gene 1 protein homolog (CPXCR1).